The following is a 438-amino-acid chain: Glutaryl-CoA dehydrogenase, mitochondrial (438 aa).

A mitochondrion-targeting transit peptide spans 1 to 44; sequence MALRGVYAQLLNRGPGLRVFRSWSSATAQTEKGEKTQSRSAKPS. Substrate-binding positions include 138–139 and serine 186; that span reads RS. Residues 177–186, serine 186, and 212–214 contribute to the FAD site; these read FGLTEPNHGS and WIT. Lysine 240 bears the N6-acetyllysine mark. Residue 287–294 coordinates substrate; it reads FGCLNNAR. FAD-binding positions include arginine 319, glutamine 330, and 387 to 391; that span reads DMLGG. The active-site Proton acceptor is the glutamate 414. Residue glycine 415 participates in substrate binding. Residues threonine 416, 416–418, and phenylalanine 434 contribute to the FAD site; that span reads THD.

It belongs to the acyl-CoA dehydrogenase family. Homotetramer. Requires FAD as cofactor.

Its subcellular location is the mitochondrion matrix. It carries out the reaction glutaryl-CoA + oxidized [electron-transfer flavoprotein] + 2 H(+) = (2E)-butenoyl-CoA + reduced [electron-transfer flavoprotein] + CO2. It participates in amino-acid metabolism; lysine degradation. Its pathway is amino-acid metabolism; tryptophan metabolism. In terms of biological role, catalyzes the oxidative decarboxylation of glutaryl-CoA to crotonyl-CoA and CO(2) in the degradative pathway of L-lysine, L-hydroxylysine, and L-tryptophan metabolism. It uses electron transfer flavoprotein as its electron acceptor. This is Glutaryl-CoA dehydrogenase, mitochondrial (GCDH) from Bos taurus (Bovine).